Here is a 113-residue protein sequence, read N- to C-terminus: T cell receptor alpha variable 8-6 (113 aa).

The N-terminal stretch at Met1–Ala20 is a signal peptide. One can recognise an Ig-like domain in the interval Gln21–Ser113. Cys42 and Cys110 are joined by a disulfide. N-linked (GlcNAc...) asparagine glycosylation is found at Asn43 and Asn87.

In terms of assembly, alpha-beta TR is a heterodimer composed of an alpha and beta chain; disulfide-linked. The alpha-beta TR is associated with the transmembrane signaling CD3 coreceptor proteins to form the TR-CD3 (TcR or TCR). The assembly of alpha-beta TR heterodimers with CD3 occurs in the endoplasmic reticulum where a single alpha-beta TR heterodimer associates with one CD3D-CD3E heterodimer, one CD3G-CD3E heterodimer and one CD247 homodimer forming a stable octameric structure. CD3D-CD3E and CD3G-CD3E heterodimers preferentially associate with TR alpha and TR beta chains, respectively. The association of the CD247 homodimer is the last step of TcR assembly in the endoplasmic reticulum and is required for transport to the cell surface.

The protein localises to the cell membrane. In terms of biological role, v region of the variable domain of T cell receptor (TR) alpha chain that participates in the antigen recognition. Alpha-beta T cell receptors are antigen specific receptors which are essential to the immune response and are present on the cell surface of T lymphocytes. Recognize peptide-major histocompatibility (MH) (pMH) complexes that are displayed by antigen presenting cells (APC), a prerequisite for efficient T cell adaptive immunity against pathogens. Binding of alpha-beta TR to pMH complex initiates TR-CD3 clustering on the cell surface and intracellular activation of LCK that phosphorylates the ITAM motifs of CD3G, CD3D, CD3E and CD247 enabling the recruitment of ZAP70. In turn ZAP70 phosphorylates LAT, which recruits numerous signaling molecules to form the LAT signalosome. The LAT signalosome propagates signal branching to three major signaling pathways, the calcium, the mitogen-activated protein kinase (MAPK) kinase and the nuclear factor NF-kappa-B (NF-kB) pathways, leading to the mobilization of transcription factors that are critical for gene expression and essential for T cell growth and differentiation. The T cell repertoire is generated in the thymus, by V-(D)-J rearrangement. This repertoire is then shaped by intrathymic selection events to generate a peripheral T cell pool of self-MH restricted, non-autoaggressive T cells. Post-thymic interaction of alpha-beta TR with the pMH complexes shapes TR structural and functional avidity. In Homo sapiens (Human), this protein is T cell receptor alpha variable 8-6.